A 427-amino-acid polypeptide reads, in one-letter code: Glutamyl-tRNA reductase (427 aa).

Substrate is bound by residues 50–53 (TCNR), Ser110, 115–117 (ETQ), and Gln121. The active-site Nucleophile is Cys51. 190-195 (GAGEMG) provides a ligand contact to NADP(+).

Belongs to the glutamyl-tRNA reductase family. In terms of assembly, homodimer.

It carries out the reaction (S)-4-amino-5-oxopentanoate + tRNA(Glu) + NADP(+) = L-glutamyl-tRNA(Glu) + NADPH + H(+). The protein operates within porphyrin-containing compound metabolism; protoporphyrin-IX biosynthesis; 5-aminolevulinate from L-glutamyl-tRNA(Glu): step 1/2. Catalyzes the NADPH-dependent reduction of glutamyl-tRNA(Glu) to glutamate 1-semialdehyde (GSA). The chain is Glutamyl-tRNA reductase from Campylobacter concisus (strain 13826).